A 631-amino-acid chain; its full sequence is Integrator complex subunit 10 (631 aa).

Polar residues predominate over residues 545 to 570 (FELTSSPNSSGTPTATTVAGGSQSRR). The tract at residues 545 to 577 (FELTSSPNSSGTPTATTVAGGSQSRRIGTRGAD) is disordered.

It belongs to the Integrator subunit 10 family. In terms of assembly, belongs to the multiprotein complex Integrator, at least composed of IntS1, IntS2, IntS3, IntS4, omd/IntS5, IntS6, defl/IntS7, IntS8, IntS9, IntS10, IntS11, IntS12, asun/IntS13, IntS14 and IntS15. The core complex associates with protein phosphatase 2A subunits mts/PP2A and Pp2A-29B, to form the Integrator-PP2A (INTAC) complex.

The protein localises to the nucleus. In terms of biological role, component of the integrator complex, a multiprotein complex that terminates RNA polymerase II (Pol II) transcription in the promoter-proximal region of genes. The integrator complex provides a quality checkpoint during transcription elongation by driving premature transcription termination of transcripts that are unfavorably configured for transcriptional elongation: the complex terminates transcription by (1) catalyzing dephosphorylation of the C-terminal domain (CTD) of Pol II subunit Polr2A/Rbp1 and Spt5, and (2) degrading the exiting nascent RNA transcript via endonuclease activity. The integrator complex is also involved in the 3'-end processing of the U7 snRNA, and also the spliceosomal snRNAs U1, U2, U4 and U5. The protein is Integrator complex subunit 10 of Drosophila melanogaster (Fruit fly).